Consider the following 269-residue polypeptide: Propanediol uptake facilitator PduF (269 aa).

A run of 2 helical transmembrane segments spans residues 10-30 (IAEFLGTGLFLFFGIGCLSAL) and 42-62 (ICIIWGLGISLAVYLTAGISG). The NPA 1 motif lies at 66–68 (NPA). 3 consecutive transmembrane segments (helical) span residues 69–89 (ITIALWLFACFPGRKVLPYTV), 143–163 (VWQAALVEVVITSILMGMIMA), and 179–199 (LLIGILVAVIGASTGPLTGFA). An NPA 2 motif is present at residues 201–203 (NPA). Residues 228-248 (IPYFIVPIVAPIIGACAGAAI) form a helical membrane-spanning segment.

The protein belongs to the MIP/aquaporin (TC 1.A.8) family.

It is found in the cell inner membrane. Probably facilitates diffusion of 1,2-propanediol (1,2-PD) into the cell. This is Propanediol uptake facilitator PduF from Citrobacter freundii.